Consider the following 267-residue polypeptide: MGKALSHVAKHTCHDECQDSLTSSPGYSAMQTDDSKSGGDVSQFPYVEFTGRDSVTCPTCQGTGRIPRGQENQLVALIPYSDQRLRPRRTKLYVMASVILCLLLCTLAVFFLFPRSIDVNYVGVKSVYVSYDQSKRIVYLNVTNSLNITNNNYYSVDVANITARVQFSQTVIGKTRISNITTIGPLDMKQIDYMVPTTIADEMSYMYDYCTLQSIKVHNIVVMMQITVTTVYFGHAEQVSQEMYQYVDCGGNTTALHEYSLNTPLTG.

At 1 to 92 (MGKALSHVAK…QRLRPRRTKL (92 aa)) the chain is on the cytoplasmic side. A helical transmembrane segment spans residues 93–113 (YVMASVILCLLLCTLAVFFLF). Residues 114–267 (PRSIDVNYVG…EYSLNTPLTG (154 aa)) lie on the Lumenal side of the membrane. N-linked (GlcNAc...) asparagine glycosylation is found at asparagine 141, asparagine 147, asparagine 160, and asparagine 179. Cysteine 210 and cysteine 249 form a disulfide bridge. Asparagine 252 is a glycosylation site (N-linked (GlcNAc...) asparagine).

It belongs to the TMEM106 family.

It localises to the late endosome membrane. It is found in the lysosome membrane. The protein resides in the cell membrane. In neurons, involved in the transport of late endosomes/lysosomes. May be involved in dendrite morphogenesis and maintenance by regulating lysosomal trafficking. May act as a molecular brake for retrograde transport of late endosomes/lysosomes, possibly via its interaction with MAP6. In motoneurons, may mediate the axonal transport of lysosomes and axonal sorting at the initial segment. It remains unclear whether TMEM106B affects the transport of moving lysosomes in the anterograde or retrograde direction in neurites and whether it is particularly important in the sorting of lysosomes in axons or in dendrites. In neurons, may also play a role in the regulation of lysosomal size and responsiveness to stress. Required for proper lysosomal acidification. This chain is Transmembrane protein 106B (tmem106b), found in Danio rerio (Zebrafish).